The sequence spans 77 residues: Conotoxin Mr8.2 (77 aa).

The signal sequence occupies residues 1–16 (MLRLITAAVLVSACLA). Positions 17-32 (YPQKKRTPPQTRPTSR) are excised as a propeptide.

Belongs to the conotoxin B2 family. Post-translationally, contains 5 disulfide bonds. In terms of tissue distribution, expressed by the venom duct.

The protein resides in the secreted. The chain is Conotoxin Mr8.2 from Conus marmoreus (Marble cone).